Consider the following 348-residue polypeptide: Aminotransferase atnJ (348 aa).

Arginine 79 provides a ligand contact to pyridoxal 5'-phosphate. Lysine 180 is subject to N6-(pyridoxal phosphate)lysine. Position 216 (glutamate 216) interacts with pyridoxal 5'-phosphate.

The protein belongs to the class-IV pyridoxal-phosphate-dependent aminotransferase family. Pyridoxal 5'-phosphate serves as cofactor.

It functions in the pathway secondary metabolite biosynthesis. Its function is as follows. Aminotransferase; part of the gene cluster that mediates the biosynthesis of aspercryptins, linear lipopeptides built from six amino acids including 2 highly unusual and nonproteogenic amino acids, 2-amino-octanoic acid (2aoa) and 2-amino-dodecanol (2adol). The core structure of aspercryptins is as follows: Ser/Ala-Thr-Ile/Val-2aoa-Asn-2adol. The first step of aspercryptin biosynthesis is the generation of the fatty acid precursors, octanoic and dodecanoic acids, by the FAS subunits atnF and atnM. The fatty acid precursors are likely transformed into the corresponding alpha-amino fatty acids in three steps. First, they are hydroxylated by the cytochrome P450 monooxygenase atnE, then oxidized to the corresponding alpha-keto acids by the NAD(P)-dependent oxidoreductase atnD, and finally converted to the alpha-amino fatty acids by the PLP-dependent aminotransferases atnH or atnJ. the alpha-amino fatty acids, 2-amino-octanoic and 2-amino-dodecanoic acids, are recognized, activated, and covalently tethered to the NRPS atnA by its fourth and sixth adenylation domains. The second module of atnA is the Thr module and contains an epimerase (E) domain responsible for the epimerization of Thr to D-allo-Thr. Additionally, despite atnA having only one epimerase domain, the first amino acid of aspercryptin A1 is D-Ser, suggesting that serine is either loaded directly as D-Ser on the first module or that the epimerase domain in the threonine module epimerizes both L-Ser and L-Thr. After condensation of the hexapeptide of aspercryptin, the C-terminal reductase (TE) domain might be involved in the reductive release and production of the aldehyde hexapeptide. Further reduction would generate aspercryptins. The variety of aspercryptins produced reflects the flexibility of the atnA NRPS, allowing incorporation of alanine instead of serine, valine for isoleucine, and a C10 fatty amino alcohol instead of the C12 version. AtnB seems to be involved in the selectivity for Ile versus Val by the third module. Moreover, type B, C and D aspercryptins have an additional N-terminal cichorine, acetyl and propionyl group respectively. This is Aminotransferase atnJ from Emericella nidulans (strain FGSC A4 / ATCC 38163 / CBS 112.46 / NRRL 194 / M139) (Aspergillus nidulans).